The primary structure comprises 397 residues: Acetate kinase 2 (397 aa).

Residue Asn10 coordinates Mg(2+). Lys17 provides a ligand contact to ATP. Arg90 lines the substrate pocket. Catalysis depends on Asp147, which acts as the Proton donor/acceptor. Residues 207-211 (HLGNG), 281-283 (DCR), and 329-333 (GIGEN) contribute to the ATP site. Position 383 (Glu383) interacts with Mg(2+).

It belongs to the acetokinase family. Homodimer. It depends on Mg(2+) as a cofactor. Mn(2+) serves as cofactor.

Its subcellular location is the cytoplasm. It catalyses the reaction acetate + ATP = acetyl phosphate + ADP. Its pathway is metabolic intermediate biosynthesis; acetyl-CoA biosynthesis; acetyl-CoA from acetate: step 1/2. Functionally, catalyzes the formation of acetyl phosphate from acetate and ATP. Can also catalyze the reverse reaction. The chain is Acetate kinase 2 from Photobacterium profundum (strain SS9).